Reading from the N-terminus, the 267-residue chain is 5'-nucleotidase SurE (267 aa).

A divalent metal cation is bound by residues Asp-14, Asp-15, Ser-45, and Asn-100.

It belongs to the SurE nucleotidase family. Requires a divalent metal cation as cofactor.

Its subcellular location is the cytoplasm. It catalyses the reaction a ribonucleoside 5'-phosphate + H2O = a ribonucleoside + phosphate. Its function is as follows. Nucleotidase that shows phosphatase activity on nucleoside 5'-monophosphates. This Methanosarcina acetivorans (strain ATCC 35395 / DSM 2834 / JCM 12185 / C2A) protein is 5'-nucleotidase SurE.